A 186-amino-acid polypeptide reads, in one-letter code: Lactoylglutathione lyase (186 aa).

The VOC domain occupies Phe28–Arg175. Gln31 and Arg35 together coordinate substrate. Residue Gln31 participates in Zn(2+) binding. Glu97 is a binding site for Zn(2+). Residues Asn101, Arg121, His125, and Lys155–Met156 contribute to the substrate site. His125 lines the Zn(2+) pocket. Glu171 is a binding site for Zn(2+). Catalysis depends on Glu171, which acts as the Proton donor/acceptor.

This sequence belongs to the glyoxalase I family. Zn(2+) serves as cofactor.

It carries out the reaction (R)-S-lactoylglutathione = methylglyoxal + glutathione. Its pathway is secondary metabolite metabolism; methylglyoxal degradation; (R)-lactate from methylglyoxal: step 1/2. Functionally, catalyzes the conversion of hemimercaptal, formed from methylglyoxal and glutathione, to S-lactoylglutathione. This is Lactoylglutathione lyase from Cicer arietinum (Chickpea).